Here is a 395-residue protein sequence, read N- to C-terminus: uncharacterized protein (395 aa).

A disordered region spans residues 115 to 144 (TKPPTEGGPEKDQSSPSQTQAAPQGPSTAS). Positions 128–141 (SSPSQTQAAPQGPS) are enriched in low complexity.

This is an uncharacterized protein from Homo sapiens (Human).